The sequence spans 279 residues: 4-hydroxy-3-methylbut-2-enyl diphosphate reductase (279 aa).

Cys-12 provides a ligand contact to [4Fe-4S] cluster. Residues His-40 and His-72 each contribute to the (2E)-4-hydroxy-3-methylbut-2-enyl diphosphate site. Dimethylallyl diphosphate contacts are provided by His-40 and His-72. Residues His-40 and His-72 each contribute to the isopentenyl diphosphate site. Cys-94 serves as a coordination point for [4Fe-4S] cluster. His-122 provides a ligand contact to (2E)-4-hydroxy-3-methylbut-2-enyl diphosphate. Position 122 (His-122) interacts with dimethylallyl diphosphate. His-122 contacts isopentenyl diphosphate. Glu-124 acts as the Proton donor in catalysis. Thr-161 contacts (2E)-4-hydroxy-3-methylbut-2-enyl diphosphate. Cys-189 is a binding site for [4Fe-4S] cluster. (2E)-4-hydroxy-3-methylbut-2-enyl diphosphate contacts are provided by Ser-217, Asn-219, and Ser-261. Ser-217, Asn-219, and Ser-261 together coordinate dimethylallyl diphosphate. Residues Ser-217, Asn-219, and Ser-261 each contribute to the isopentenyl diphosphate site.

Belongs to the IspH family. The cofactor is [4Fe-4S] cluster.

The catalysed reaction is isopentenyl diphosphate + 2 oxidized [2Fe-2S]-[ferredoxin] + H2O = (2E)-4-hydroxy-3-methylbut-2-enyl diphosphate + 2 reduced [2Fe-2S]-[ferredoxin] + 2 H(+). The enzyme catalyses dimethylallyl diphosphate + 2 oxidized [2Fe-2S]-[ferredoxin] + H2O = (2E)-4-hydroxy-3-methylbut-2-enyl diphosphate + 2 reduced [2Fe-2S]-[ferredoxin] + 2 H(+). It participates in isoprenoid biosynthesis; dimethylallyl diphosphate biosynthesis; dimethylallyl diphosphate from (2E)-4-hydroxy-3-methylbutenyl diphosphate: step 1/1. It functions in the pathway isoprenoid biosynthesis; isopentenyl diphosphate biosynthesis via DXP pathway; isopentenyl diphosphate from 1-deoxy-D-xylulose 5-phosphate: step 6/6. Catalyzes the conversion of 1-hydroxy-2-methyl-2-(E)-butenyl 4-diphosphate (HMBPP) into a mixture of isopentenyl diphosphate (IPP) and dimethylallyl diphosphate (DMAPP). Acts in the terminal step of the DOXP/MEP pathway for isoprenoid precursor biosynthesis. In Syntrophotalea carbinolica (strain DSM 2380 / NBRC 103641 / GraBd1) (Pelobacter carbinolicus), this protein is 4-hydroxy-3-methylbut-2-enyl diphosphate reductase.